The sequence spans 1021 residues: Sodium/potassium-transporting ATPase subunit alpha-1 (1021 aa).

A propeptide spanning residues 1–5 (MGKGG) is cleaved from the precursor. Over residues 1–11 (MGKGGGRDKYE) the composition is skewed to basic and acidic residues. Residues 1 to 37 (MGKGGGRDKYEPAAISEHGNKKKAKKERDMDELKKEV) are disordered. Over 6–85 (GRDKYEPAAI…NALTPPPTTP (80 aa)) the chain is Cytoplasmic. N6-acetyllysine is present on K9. Y10 is subject to Phosphotyrosine. Phosphoserine; by PKC is present on S16. K21 carries the N6-acetyllysine modification. Over residues 26–37 (KERDMDELKKEV) the composition is skewed to basic and acidic residues. A phosphoserine mark is found at S38 and S45. Positions 80–82 (PPP) are phosphoinositide-3 kinase binding. The chain crosses the membrane as a helical span at residues 86–106 (EWVKFCRQLFGGFSMLLWIGA). Residues 107 to 129 (ILCFLAYGIQAATEEEPQNDNLY) lie on the Extracellular side of the membrane. Residues 130–150 (LGVVLSAVVIITGCFSYYQEA) form a helical membrane-spanning segment. Residues 151 to 286 (KSSKIMESFK…GGQTPIAAEI (136 aa)) lie on the Cytoplasmic side of the membrane. Residues 214–233 (SSLTGESEPQTRSPDFTNEN) form a disordered region. Position 226 is a phosphoserine (S226). Y258 bears the Phosphotyrosine mark. Residues 287 to 306 (EHFIHIITGVAVFLGVTFFI) form a helical membrane-spanning segment. Residues 307 to 318 (LSLILEYTWLEA) lie on the Extracellular side of the membrane. Residues 319–336 (VIFLIGIIVANVPEGLLA) traverse the membrane as a helical segment. At 337–770 (TVTVCLTLTA…EEGRLIFDNL (434 aa)) the chain is on the cytoplasmic side. Catalysis depends on D374, which acts as the 4-aspartylphosphate intermediate. A phosphoserine mark is found at S450 and S482. Residue K485 participates in ATP binding. Y540 carries the phosphotyrosine modification. The segment at 594–715 (RAAVPDAVGK…QGAIVAVTGD (122 aa)) is mediates interaction with SCN7A. K659 bears the N6-succinyllysine mark. S666 carries the post-translational modification Phosphoserine. Positions 715 and 719 each coordinate Mg(2+). A helical membrane pass occupies residues 771–790 (KKSIAYTLTSNIPEITPFLI). At 791-800 (FIIANIPLPL) the chain is on the extracellular side. A helical membrane pass occupies residues 801-821 (GTVTILCIDLGTDMVPAISLA). Residues 822–841 (YEQAESDIMKRQPRNPQTDK) are Cytoplasmic-facing. A helical transmembrane segment spans residues 842 to 864 (LVNERLISMAYGQIGMIQALGGF). Over 865–916 (FTYFVILAENGFLPIHLLGLRVDWDDRWVNDVEDSYGQQWTYEQRKIVEFTC) the chain is Extracellular. A helical transmembrane segment spans residues 917 to 936 (HTAFFVSIVVVQWADLVICK). Residues 937–949 (TRRNSVFQQGMKN) lie on the Cytoplasmic side of the membrane. S941 is modified (phosphoserine; by PKA). A helical transmembrane segment spans residues 950–968 (KILIFGLFEETALAAFLSY). The Extracellular portion of the chain corresponds to 969 to 983 (CPGMGVALRMYPLKP). Residues 984–1004 (TWWFCAFPYSLLIFVYDEVRK) form a helical membrane-spanning segment. Topologically, residues 1005–1021 (LIIRRRPGGWVEKETYY) are cytoplasmic.

Belongs to the cation transport ATPase (P-type) (TC 3.A.3) family. Type IIC subfamily. As to quaternary structure, the sodium/potassium-transporting ATPase is composed of a catalytic alpha subunit, an auxiliary non-catalytic beta subunit and an additional regulatory subunit. Interacts with regulatory subunit FXYD1. Interacts with regulatory subunit FXYD3. Interacts with SIK1. Interacts with SLC35G1 and STIM1. Interacts with CLN3; this interaction regulates the sodium/potassium-transporting ATPase complex localization at the plasma membrane. Interacts with SCN7A; activates ATP1A1 P-type sodium:potassium-exchanging transporter activity which indirectly signals to nearby neurons to regulate sodium homeostasis. Phosphorylation on Tyr-10 modulates pumping activity. Phosphorylation of Ser-941 by PKA modulates the response of ATP1A1 to PKC. Dephosphorylation by protein phosphatase 2A (PP2A) following increases in intracellular sodium, leading to increase catalytic activity.

The protein localises to the cell membrane. Its subcellular location is the basolateral cell membrane. The protein resides in the sarcolemma. It localises to the cell projection. It is found in the axon. The protein localises to the melanosome. It carries out the reaction K(+)(out) + Na(+)(in) + ATP + H2O = K(+)(in) + Na(+)(out) + ADP + phosphate + H(+). Functionally, this is the catalytic component of the active enzyme, which catalyzes the hydrolysis of ATP coupled with the exchange of sodium and potassium ions across the plasma membrane. This action creates the electrochemical gradient of sodium and potassium ions, providing the energy for active transport of various nutrients. Could also be part of an osmosensory signaling pathway that senses body-fluid sodium levels and controls salt intake behavior as well as voluntary water intake to regulate sodium homeostasis. The sequence is that of Sodium/potassium-transporting ATPase subunit alpha-1 (ATP1A1) from Equus caballus (Horse).